The following is a 271-amino-acid chain: 3-methyl-2-oxobutanoate hydroxymethyltransferase 1 (271 aa).

Residues D53 and D92 each coordinate Mg(2+). Residues 53–54, D92, and K120 each bind 3-methyl-2-oxobutanoate; that span reads DS. E122 contributes to the Mg(2+) binding site. E189 (proton acceptor) is an active-site residue.

It belongs to the PanB family. Homodecamer; pentamer of dimers. Mg(2+) is required as a cofactor.

It localises to the cytoplasm. The catalysed reaction is 3-methyl-2-oxobutanoate + (6R)-5,10-methylene-5,6,7,8-tetrahydrofolate + H2O = 2-dehydropantoate + (6S)-5,6,7,8-tetrahydrofolate. It functions in the pathway cofactor biosynthesis; (R)-pantothenate biosynthesis; (R)-pantoate from 3-methyl-2-oxobutanoate: step 1/2. In terms of biological role, catalyzes the reversible reaction in which hydroxymethyl group from 5,10-methylenetetrahydrofolate is transferred onto alpha-ketoisovalerate to form ketopantoate. This Burkholderia ambifaria (strain ATCC BAA-244 / DSM 16087 / CCUG 44356 / LMG 19182 / AMMD) (Burkholderia cepacia (strain AMMD)) protein is 3-methyl-2-oxobutanoate hydroxymethyltransferase 1.